The following is a 290-amino-acid chain: MTLLADRAPAKVNLTLHVLGRRVGDGYHVLESLVAFAGTADRLTLDPDAPLGLTVSGPTAGPAGPTDDNLVLRAARGLAARVPGLRAGAFHLVKRLPVAAGIGGGSSDAAAALRLLARLNGLPLDHAAVGAVARETGADVPVCLDPRARMMRGAGEEIGAALGLEPLPAVLINPGVPVPTAPVFRALGLSVGQDLAGAPHPTIPQATATDTLLQALAGARNDLEAPALTVAPVIGDALAALRAQGCRLARMSGSGATVFALFADRRAAVRAAAALRAAHPGWWVAPTFLR.

Residue Lys11 is part of the active site. An ATP-binding site is contributed by 97–107; sequence PVAAGIGGGSS. Residue Asp139 is part of the active site.

This sequence belongs to the GHMP kinase family. IspE subfamily.

The catalysed reaction is 4-CDP-2-C-methyl-D-erythritol + ATP = 4-CDP-2-C-methyl-D-erythritol 2-phosphate + ADP + H(+). Its pathway is isoprenoid biosynthesis; isopentenyl diphosphate biosynthesis via DXP pathway; isopentenyl diphosphate from 1-deoxy-D-xylulose 5-phosphate: step 3/6. In terms of biological role, catalyzes the phosphorylation of the position 2 hydroxy group of 4-diphosphocytidyl-2C-methyl-D-erythritol. The sequence is that of 4-diphosphocytidyl-2-C-methyl-D-erythritol kinase from Methylobacterium radiotolerans (strain ATCC 27329 / DSM 1819 / JCM 2831 / NBRC 15690 / NCIMB 10815 / 0-1).